A 376-amino-acid polypeptide reads, in one-letter code: Putative transcription factor egl-18 (376 aa).

Disordered stretches follow at residues 1–33, 65–122, 148–197, and 240–264; these read MSIS…CSGC, NNEL…LPDF, MVQQ…SDIP, and ATPS…PNAA. Residues 9-27 show a composition bias toward basic and acidic residues; sequence TRPESAEQQHHEVLQRPSD. Composition is skewed to low complexity over residues 68–89 and 165–175; these read LKSS…RSSP and QQSVSPPQSKS. The span at 176 to 195 shows a compositional bias: basic and acidic residues; the sequence is VKIEDPMDQDVKQEESERSD. A compositionally biased stretch (polar residues) spans 241-250; it reads TPSSQSQDSS. The GATA-type zinc-finger motif lies at 266–290; the sequence is CSNCRTDKTTAWRRDAEGKLVCNPC.

Expressed in differentiated seam cells. Expressed in the head and trunk.

It is found in the nucleus. Probable transcription factor. Involved in embryonic development and in vulval development in larvae, acting redundantly, at least in part, with elt-6. Perhaps acting together with elt-6, may form a positive feedback loop to initiate and maintain lin-39 gene expression to ensure proper vulval precursor cell (VPC) fate specification. Together with elt-6, acts as a downstream target of the Wnt/beta-catenin asymmetry pathway, required to adopt or maintain the seam cell fate. Required in seam cells, acting redundantly with elt-6, to promote production of alae, expression of several seam-specific genes and maintenance of seam cells in an unfused state. Plays a role in longevity. May form a transcriptional circuit with GATA factors elt-3 and elt-6. The sequence is that of Putative transcription factor egl-18 from Caenorhabditis elegans.